The sequence spans 188 residues: UPF0200 protein M164_1169 (188 aa).

15 to 22 (GMPGSGKS) is an ATP binding site.

This sequence belongs to the UPF0200 family.

The sequence is that of UPF0200 protein M164_1169 from Saccharolobus islandicus (strain M.16.4 / Kamchatka #3) (Sulfolobus islandicus).